The primary structure comprises 326 residues: Phosphate acyltransferase (326 aa).

Belongs to the PlsX family. Homodimer. Probably interacts with PlsY.

Its subcellular location is the cytoplasm. The enzyme catalyses a fatty acyl-[ACP] + phosphate = an acyl phosphate + holo-[ACP]. It functions in the pathway lipid metabolism; phospholipid metabolism. Functionally, catalyzes the reversible formation of acyl-phosphate (acyl-PO(4)) from acyl-[acyl-carrier-protein] (acyl-ACP). This enzyme utilizes acyl-ACP as fatty acyl donor, but not acyl-CoA. The sequence is that of Phosphate acyltransferase from Thermus thermophilus (strain ATCC BAA-163 / DSM 7039 / HB27).